The sequence spans 100 residues: Small ribosomal subunit protein uS14c (100 aa).

The protein belongs to the universal ribosomal protein uS14 family. As to quaternary structure, part of the 30S ribosomal subunit.

It localises to the plastid. The protein localises to the chloroplast. In terms of biological role, binds 16S rRNA, required for the assembly of 30S particles. This chain is Small ribosomal subunit protein uS14c, found in Olimarabidopsis pumila (Dwarf rocket).